Reading from the N-terminus, the 571-residue chain is Proline--tRNA ligase (571 aa).

This sequence belongs to the class-II aminoacyl-tRNA synthetase family. ProS type 1 subfamily. In terms of assembly, homodimer.

It localises to the cytoplasm. The catalysed reaction is tRNA(Pro) + L-proline + ATP = L-prolyl-tRNA(Pro) + AMP + diphosphate. Functionally, catalyzes the attachment of proline to tRNA(Pro) in a two-step reaction: proline is first activated by ATP to form Pro-AMP and then transferred to the acceptor end of tRNA(Pro). As ProRS can inadvertently accommodate and process non-cognate amino acids such as alanine and cysteine, to avoid such errors it has two additional distinct editing activities against alanine. One activity is designated as 'pretransfer' editing and involves the tRNA(Pro)-independent hydrolysis of activated Ala-AMP. The other activity is designated 'posttransfer' editing and involves deacylation of mischarged Ala-tRNA(Pro). The misacylated Cys-tRNA(Pro) is not edited by ProRS. This is Proline--tRNA ligase from Pseudomonas fluorescens (strain Pf0-1).